A 122-amino-acid polypeptide reads, in one-letter code: LOB domain-containing protein 5 (122 aa).

The LOB domain occupies 8-109; that stretch reads RPCSVCITKN…AYLRELQEKI (102 aa).

The protein belongs to the LOB domain-containing protein family.

In Arabidopsis thaliana (Mouse-ear cress), this protein is LOB domain-containing protein 5 (LBD5).